A 561-amino-acid chain; its full sequence is Alpha-1D adrenergic receptor (561 aa).

Residues 1-90 are Extracellular-facing; the sequence is MTFRDILSVT…VGGLVVSAQG (90 aa). Residues 10–71 are disordered; the sequence is TFEGPRSSSS…SSTGEPGAAA (62 aa). The segment covering 21 to 56 has biased composition (gly residues); sequence GGSGAGGGAGTVGPEGGAVGGVPGATGGGAVVGTGS. N-linked (GlcNAc...) asparagine glycans are attached at residues asparagine 60 and asparagine 76. The chain crosses the membrane as a helical span at residues 91–115; that stretch reads VGVGVFLAAFILTAVAGNLLVILSV. The Cytoplasmic segment spans residues 116–127; that stretch reads ACNRHLQTVTNY. A helical transmembrane segment spans residues 128-153; the sequence is FIVNLAVADLLLSAAVLPFSATMEVL. The Extracellular portion of the chain corresponds to 154–163; sequence GFWAFGRTFC. A helical membrane pass occupies residues 164 to 186; the sequence is DVWAAVDVLCCTASILSLCTISV. At 187–207 the chain is on the cytoplasmic side; that stretch reads DRYVGVRHSLKYPAIMTERKA. A helical membrane pass occupies residues 208 to 232; it reads AAILALLWAVALVVSVGPLLGWKEP. Residues 233-245 lie on the Extracellular side of the membrane; the sequence is VPPDERFCGITEE. Residues 246-269 traverse the membrane as a helical segment; the sequence is VGYAIFSSVCSFYLPMAVIVVMYC. Residues 270-342 are Cytoplasmic-facing; the sequence is RVYVVARSTT…KFSREKKAAK (73 aa). Residues 343–367 form a helical membrane-spanning segment; the sequence is TLAIVVGVFVLCWFPFFFVLPLGSL. Topologically, residues 368 to 374 are extracellular; the sequence is FPQLKPS. Residues 375–399 traverse the membrane as a helical segment; it reads EGVFKVIFWLGYFNSCVNPLIYPCS. At 400–561 the chain is on the cytoplasmic side; sequence SREFKRAFLR…DYSNLRETDI (162 aa). Cysteine 413 carries the S-palmitoyl cysteine lipid modification. Residues 452–481 are disordered; that stretch reads APLALTAHPGAGSADTPETQDSVSSSRKPA. Residues 467 to 479 show a composition bias toward polar residues; it reads TPETQDSVSSSRK.

This sequence belongs to the G-protein coupled receptor 1 family. Adrenergic receptor subfamily. ADRA1D sub-subfamily. As to quaternary structure, interacts with FLNA (via filamin repeat 21); increases PKA-mediated phosphorylation of FLNA. Palmitoylated. Palmitoylation by ZDHHC21 may increase the expression of the receptor and regulate downstream signaling. As to expression, vas deferens, hippocampus, cerebral cortex, aorta, brain stem, heart and spleen.

The protein resides in the cell membrane. In terms of biological role, this alpha-adrenergic receptor mediates its effect through the influx of extracellular calcium. The chain is Alpha-1D adrenergic receptor (Adra1d) from Rattus norvegicus (Rat).